Reading from the N-terminus, the 294-residue chain is Protoheme IX farnesyltransferase 1 (294 aa).

Helical transmembrane passes span 8–28 (VTKP…FLLA), 35–55 (PWLM…GCAI), 82–102 (AMAA…LLIA), 107–127 (AAVF…SLYM), 132–152 (VYGT…GYCA), 162–182 (LILL…IAIF), 208–228 (IVLY…SGYT), 229–249 (GAAF…MALR), and 263–283 (QVFA…AVDY).

This sequence belongs to the UbiA prenyltransferase family. Protoheme IX farnesyltransferase subfamily.

Its subcellular location is the cell inner membrane. The catalysed reaction is heme b + (2E,6E)-farnesyl diphosphate + H2O = Fe(II)-heme o + diphosphate. The protein operates within porphyrin-containing compound metabolism; heme O biosynthesis; heme O from protoheme: step 1/1. Converts heme B (protoheme IX) to heme O by substitution of the vinyl group on carbon 2 of heme B porphyrin ring with a hydroxyethyl farnesyl side group. The chain is Protoheme IX farnesyltransferase 1 from Pseudoalteromonas translucida (strain TAC 125).